The primary structure comprises 336 residues: Mitochondrial fission regulator 2 (336 aa).

Positions 139–166 (QPDALLKISALEEELQRLRAQIATIITA) form a coiled coil. The tract at residues 296 to 336 (HRQRDDSFGKENHSAEPSPFSSPDTPRIFQHTRRSQGRIHL) is disordered. The span at 297–309 (RQRDDSFGKENHS) shows a compositional bias: basic and acidic residues. Over residues 325-336 (QHTRRSQGRIHL) the composition is skewed to basic residues.

It belongs to the MTFR1 family.

The protein localises to the mitochondrion. May play a role in mitochondrial aerobic respiration. Can also promote mitochondrial fission. This is Mitochondrial fission regulator 2 (mtfr2) from Danio rerio (Zebrafish).